The primary structure comprises 120 residues: Anti-adapter protein IraM (120 aa).

This sequence belongs to the IraM/RssC family.

It localises to the cytoplasm. Its function is as follows. Involved in the stabilization of the sigma stress factor RpoS. This chain is Anti-adapter protein IraM, found in Salmonella typhimurium (strain LT2 / SGSC1412 / ATCC 700720).